The chain runs to 450 residues: Signal recognition particle protein (450 aa).

Residues 107–114, 190–194, and 248–251 contribute to the GTP site; these read GLQGSGKT, DTAGR, and TKTD.

It belongs to the GTP-binding SRP family. SRP54 subfamily. As to quaternary structure, part of the signal recognition particle protein translocation system, which is composed of SRP and FtsY. SRP is a ribonucleoprotein composed of Ffh and a 4.5S RNA molecule.

It localises to the cytoplasm. It catalyses the reaction GTP + H2O = GDP + phosphate + H(+). Involved in targeting and insertion of nascent membrane proteins into the cytoplasmic membrane. Binds to the hydrophobic signal sequence of the ribosome-nascent chain (RNC) as it emerges from the ribosomes. The SRP-RNC complex is then targeted to the cytoplasmic membrane where it interacts with the SRP receptor FtsY. Interaction with FtsY leads to the transfer of the RNC complex to the Sec translocase for insertion into the membrane, the hydrolysis of GTP by both Ffh and FtsY, and the dissociation of the SRP-FtsY complex into the individual components. The chain is Signal recognition particle protein from Buchnera aphidicola subsp. Baizongia pistaciae (strain Bp).